Reading from the N-terminus, the 265-residue chain is Orotidine 5'-phosphate decarboxylase (265 aa).

Substrate-binding positions include Asp-37, 59–61, 91–100, Tyr-217, and Arg-235; these read KTH and DRKFADIGNT. Lys-93 functions as the Proton donor in the catalytic mechanism.

This sequence belongs to the OMP decarboxylase family.

The enzyme catalyses orotidine 5'-phosphate + H(+) = UMP + CO2. It participates in pyrimidine metabolism; UMP biosynthesis via de novo pathway; UMP from orotate: step 2/2. This is Orotidine 5'-phosphate decarboxylase (URA3) from Candida glabrata (strain ATCC 2001 / BCRC 20586 / JCM 3761 / NBRC 0622 / NRRL Y-65 / CBS 138) (Yeast).